The following is a 340-amino-acid chain: GTP 3',8-cyclase (340 aa).

One can recognise a Radical SAM core domain in the interval 8–230 (KLGRPIRDLR…EQHFEIDPVE (223 aa)). R17 contacts GTP. The [4Fe-4S] cluster site is built by C24 and C28. Position 30 (Y30) interacts with S-adenosyl-L-methionine. C31 contributes to the [4Fe-4S] cluster binding site. R71 is a GTP binding site. G75 is a binding site for S-adenosyl-L-methionine. T102 is a binding site for GTP. An S-adenosyl-L-methionine-binding site is contributed by S126. K163 provides a ligand contact to GTP. M197 lines the S-adenosyl-L-methionine pocket. [4Fe-4S] cluster contacts are provided by C261 and C264. Position 266–268 (266–268 (RAR)) interacts with GTP. C278 is a binding site for [4Fe-4S] cluster.

Belongs to the radical SAM superfamily. MoaA family. Monomer and homodimer. Requires [4Fe-4S] cluster as cofactor.

The enzyme catalyses GTP + AH2 + S-adenosyl-L-methionine = (8S)-3',8-cyclo-7,8-dihydroguanosine 5'-triphosphate + 5'-deoxyadenosine + L-methionine + A + H(+). It functions in the pathway cofactor biosynthesis; molybdopterin biosynthesis. In terms of biological role, catalyzes the cyclization of GTP to (8S)-3',8-cyclo-7,8-dihydroguanosine 5'-triphosphate. This chain is GTP 3',8-cyclase, found in Staphylococcus aureus (strain bovine RF122 / ET3-1).